We begin with the raw amino-acid sequence, 246 residues long: tRNA1(Val) (adenine(37)-N6)-methyltransferase (246 aa).

This sequence belongs to the methyltransferase superfamily. tRNA (adenine-N(6)-)-methyltransferase family.

Its subcellular location is the cytoplasm. It carries out the reaction adenosine(37) in tRNA1(Val) + S-adenosyl-L-methionine = N(6)-methyladenosine(37) in tRNA1(Val) + S-adenosyl-L-homocysteine + H(+). Its function is as follows. Specifically methylates the adenine in position 37 of tRNA(1)(Val) (anticodon cmo5UAC). The polypeptide is tRNA1(Val) (adenine(37)-N6)-methyltransferase (Shewanella halifaxensis (strain HAW-EB4)).